A 461-amino-acid polypeptide reads, in one-letter code: ATP synthase subunit beta (461 aa).

Residue 151 to 158 coordinates ATP; it reads GGAGVGKT.

The protein belongs to the ATPase alpha/beta chains family. F-type ATPases have 2 components, CF(1) - the catalytic core - and CF(0) - the membrane proton channel. CF(1) has five subunits: alpha(3), beta(3), gamma(1), delta(1), epsilon(1). CF(0) has three main subunits: a(1), b(2) and c(9-12). The alpha and beta chains form an alternating ring which encloses part of the gamma chain. CF(1) is attached to CF(0) by a central stalk formed by the gamma and epsilon chains, while a peripheral stalk is formed by the delta and b chains.

It is found in the cell inner membrane. It catalyses the reaction ATP + H2O + 4 H(+)(in) = ADP + phosphate + 5 H(+)(out). Produces ATP from ADP in the presence of a proton gradient across the membrane. The catalytic sites are hosted primarily by the beta subunits. The polypeptide is ATP synthase subunit beta (Colwellia psychrerythraea (strain 34H / ATCC BAA-681) (Vibrio psychroerythus)).